The following is a 325-amino-acid chain: Elongation factor P--(R)-beta-lysine ligase (325 aa).

76–78 (SPE) contacts substrate. Residues 100–102 (RNE) and N109 each bind ATP. Y118 serves as a coordination point for substrate. 244–245 (EL) is a binding site for ATP. E251 contributes to the substrate binding site. G300 lines the ATP pocket.

This sequence belongs to the class-II aminoacyl-tRNA synthetase family. EpmA subfamily. Homodimer.

The catalysed reaction is D-beta-lysine + L-lysyl-[protein] + ATP = N(6)-((3R)-3,6-diaminohexanoyl)-L-lysyl-[protein] + AMP + diphosphate + H(+). Functionally, with EpmB is involved in the beta-lysylation step of the post-translational modification of translation elongation factor P (EF-P) on 'Lys-34'. Catalyzes the ATP-dependent activation of (R)-beta-lysine produced by EpmB, forming a lysyl-adenylate, from which the beta-lysyl moiety is then transferred to the epsilon-amino group of EF-P 'Lys-34'. This is Elongation factor P--(R)-beta-lysine ligase from Salmonella arizonae (strain ATCC BAA-731 / CDC346-86 / RSK2980).